The chain runs to 62 residues: Large ribosomal subunit protein bL28 (62 aa).

The protein belongs to the bacterial ribosomal protein bL28 family.

The sequence is that of Large ribosomal subunit protein bL28 from Thermoanaerobacter sp. (strain X514).